The primary structure comprises 59 residues: Small ribosomal subunit protein bS21 (59 aa).

The tract at residues 40 to 59 (KPSVKRKKKSEAARKRKSFR) is disordered. Residues 43 to 59 (VKRKKKSEAARKRKSFR) are compositionally biased toward basic residues.

The protein belongs to the bacterial ribosomal protein bS21 family.

The sequence is that of Small ribosomal subunit protein bS21 from Desulforamulus reducens (strain ATCC BAA-1160 / DSM 100696 / MI-1) (Desulfotomaculum reducens).